Here is a 236-residue protein sequence, read N- to C-terminus: Syntaxin-8 (236 aa).

Residues 1–215 (MAPDPWFSTY…LVDRKSTSCG (215 aa)) lie on the Cytoplasmic side of the membrane. The stretch at 42–65 (VTIRALLQKLKEKIALLKDLLLRA) forms a coiled coil. In terms of domain architecture, t-SNARE coiled-coil homology spans 145 to 207 (QKIIQEQDAG…RTETRRVNLV (63 aa)). Phosphoserine is present on Ser160. The chain crosses the membrane as a helical; Anchor for type IV membrane protein span at residues 216-232 (MIMVILLLLVAIVVVAV). At 233 to 236 (WPTK) the chain is on the vesicular side.

This sequence belongs to the syntaxin family. In terms of assembly, forms a SNARE complex with STX7, VTI1B and VAMP8 which functions in the homotypic fusion of late endosomes. Part of the SNARE core complex containing STX7, VAMP8 and VTI1B. Interacts with VAMP8. Interacts with HECTD3. Interacts with TPC1. Post-translationally, ubiquitinated by HECTD3.

It is found in the membrane. Its function is as follows. Vesicle trafficking protein that functions in the early secretory pathway, possibly by mediating retrograde transport from cis-Golgi membranes to the ER. This Bos taurus (Bovine) protein is Syntaxin-8 (STX8).